The primary structure comprises 599 residues: Elongation factor 4 (599 aa).

The 183-residue stretch at 2–184 (KNIRNFSIIA…RLVRDIPPPQ (183 aa)) folds into the tr-type G domain. Residues 14–19 (DHGKST) and 131–134 (NKID) contribute to the GTP site.

The protein belongs to the TRAFAC class translation factor GTPase superfamily. Classic translation factor GTPase family. LepA subfamily.

It localises to the cell inner membrane. It carries out the reaction GTP + H2O = GDP + phosphate + H(+). In terms of biological role, required for accurate and efficient protein synthesis under certain stress conditions. May act as a fidelity factor of the translation reaction, by catalyzing a one-codon backward translocation of tRNAs on improperly translocated ribosomes. Back-translocation proceeds from a post-translocation (POST) complex to a pre-translocation (PRE) complex, thus giving elongation factor G a second chance to translocate the tRNAs correctly. Binds to ribosomes in a GTP-dependent manner. This Salmonella paratyphi C (strain RKS4594) protein is Elongation factor 4.